The primary structure comprises 271 residues: 4-hydroxy-tetrahydrodipicolinate reductase (271 aa).

NAD(+)-binding positions include 10–15 (GAGGRM), E36, 100–102 (GTT), and 124–127 (SGNM). H157 (proton donor/acceptor) is an active-site residue. H158 contributes to the (S)-2,3,4,5-tetrahydrodipicolinate binding site. K161 (proton donor) is an active-site residue. Residue 167 to 168 (GT) participates in (S)-2,3,4,5-tetrahydrodipicolinate binding.

Belongs to the DapB family.

The protein resides in the cytoplasm. The catalysed reaction is (S)-2,3,4,5-tetrahydrodipicolinate + NAD(+) + H2O = (2S,4S)-4-hydroxy-2,3,4,5-tetrahydrodipicolinate + NADH + H(+). The enzyme catalyses (S)-2,3,4,5-tetrahydrodipicolinate + NADP(+) + H2O = (2S,4S)-4-hydroxy-2,3,4,5-tetrahydrodipicolinate + NADPH + H(+). The protein operates within amino-acid biosynthesis; L-lysine biosynthesis via DAP pathway; (S)-tetrahydrodipicolinate from L-aspartate: step 4/4. Functionally, catalyzes the conversion of 4-hydroxy-tetrahydrodipicolinate (HTPA) to tetrahydrodipicolinate. This chain is 4-hydroxy-tetrahydrodipicolinate reductase, found in Rhodopseudomonas palustris (strain BisB18).